Consider the following 697-residue polypeptide: PAN2-PAN3 deadenylation complex subunit PAN3 (697 aa).

The C3H1-type zinc-finger motif lies at 7–36 (TAKDTLCKNILIYGYCKYENKGCAFSHNRQ). The segment at 40 to 67 (QQQQATNTSNNSTSVITPNSANSTASSA) is disordered. 2 consecutive short sequence motifs (PABPC-interacting motif-2 (PAM-2)) follow at residues 69–89 (LSSKKKFNLNTPSFQPSVSNL) and 106–126 (FKPENGVSEPDTVDSPTTQRP). Residues 106-240 (FKPENGVSEP…SAPTPGSETP (135 aa)) form a disordered region. Over residues 119 to 153 (DSPTTQRPFTSKRFNVSTPSFTPTNFDFANNSNAD) the composition is skewed to polar residues. Low complexity predominate over residues 172-187 (QNQQQQQQQQQQQQKQ). The span at 212–224 (GVSQSSPSTNPYF) shows a compositional bias: polar residues. A pseudokinase domain region spans residues 308–576 (QSLSHSNLPE…DLNEFSQRLT (269 aa)). ATP-binding positions include Arg-361, 416-423 (DYYPNSIS), and 470-471 (SK). Residues 577-615 (PKMFNIIDSLQNSSDFIEGQLTSELENARLFRLMTKLNY) adopt a coiled-coil conformation. The tract at residues 616 to 697 (LIHDNSNSEN…IDTKFRLMRE (82 aa)) is knob domain.

The protein belongs to the protein kinase superfamily. PAN3 family. Homodimer. Forms a heterotrimer with a catalytic subunit PAN2 to form the poly(A)-nuclease (PAN) deadenylation complex. Interacts (via PAM-2 motif) with poly(A)-binding protein PAB1 (via PABC domain), conferring substrate specificity of the enzyme complex.

It localises to the cytoplasm. Its function is as follows. Regulatory subunit of the poly(A)-nuclease (PAN) deadenylation complex, one of two cytoplasmic mRNA deadenylases involved in mRNA turnover. PAN specifically shortens poly(A) tails of RNA and the activity is stimulated by poly(A)-binding protein PAB1. PAN deadenylation is followed by rapid degradation of the shortened mRNA tails by the CCR4-NOT complex. Deadenylated mRNAs are then degraded by two alternative mechanisms, namely exosome-mediated 3'-5' exonucleolytic degradation, or deadenylation-dependent mRNA decaping and subsequent 5'-3' exonucleolytic degradation by XRN1. May also be involved in post-transcriptional maturation of mRNA poly(A) tails. PAN3 acts as a positive regulator for PAN activity, recruiting the catalytic subunit PAN2 to mRNA via its interaction with RNA and with PAB1. The polypeptide is PAN2-PAN3 deadenylation complex subunit PAN3 (Candida albicans (strain SC5314 / ATCC MYA-2876) (Yeast)).